Reading from the N-terminus, the 162-residue chain is Peptidyl-prolyl cis-trans isomerase-like 1 (162 aa).

In terms of domain architecture, PPIase cyclophilin-type spans 1-155 (MATDVTFDTS…DEVKILRAKV (155 aa)).

The protein belongs to the cyclophilin-type PPIase family. PPIL1 subfamily.

The catalysed reaction is [protein]-peptidylproline (omega=180) = [protein]-peptidylproline (omega=0). In terms of biological role, PPIases accelerate the folding of proteins. It catalyzes the cis-trans isomerization of proline imidic peptide bonds in oligopeptides. In Emericella nidulans (strain FGSC A4 / ATCC 38163 / CBS 112.46 / NRRL 194 / M139) (Aspergillus nidulans), this protein is Peptidyl-prolyl cis-trans isomerase-like 1 (cyp1).